Consider the following 156-residue polypeptide: Cell division protein SepF (156 aa).

The segment at 17–44 (PETADYYEDQQPAQQAPAPVPTPAPTRS) is disordered.

It belongs to the SepF family. Homodimer. Interacts with FtsZ.

The protein resides in the cytoplasm. Cell division protein that is part of the divisome complex and is recruited early to the Z-ring. Probably stimulates Z-ring formation, perhaps through the cross-linking of FtsZ protofilaments. Its function overlaps with FtsA. This is Cell division protein SepF from Limosilactobacillus fermentum (strain NBRC 3956 / LMG 18251) (Lactobacillus fermentum).